A 1857-amino-acid polypeptide reads, in one-letter code: U3 small nucleolar RNA-associated protein 10 (1857 aa).

The chain crosses the membrane as a helical span at residues 267–287 (LTAYSIISVLSSLVPLSADLV). The stretch at 1817-1855 (LIPYIAELLEDDDEEVELEVRNGLVRVIENVLGEPLDRY) is one HEAT repeat.

The protein belongs to the HEATR1/UTP10 family. Component of the ribosomal small subunit (SSU) processome.

The protein localises to the nucleus. It localises to the nucleolus. It is found in the membrane. Involved in nucleolar processing of pre-18S ribosomal RNA. Involved in ribosome biosynthesis. This is U3 small nucleolar RNA-associated protein 10 from Debaryomyces hansenii (strain ATCC 36239 / CBS 767 / BCRC 21394 / JCM 1990 / NBRC 0083 / IGC 2968) (Yeast).